Consider the following 302-residue polypeptide: Sulfate adenylyltransferase subunit 2 (302 aa).

Residues 280–302 form a disordered region; that stretch reads RQGRLIDSDQSASMEQKKRQGYF.

The protein belongs to the PAPS reductase family. CysD subfamily. In terms of assembly, heterodimer composed of CysD, the smaller subunit, and CysN.

It carries out the reaction sulfate + ATP + H(+) = adenosine 5'-phosphosulfate + diphosphate. It participates in sulfur metabolism; hydrogen sulfide biosynthesis; sulfite from sulfate: step 1/3. Its function is as follows. With CysN forms the ATP sulfurylase (ATPS) that catalyzes the adenylation of sulfate producing adenosine 5'-phosphosulfate (APS) and diphosphate, the first enzymatic step in sulfur assimilation pathway. APS synthesis involves the formation of a high-energy phosphoric-sulfuric acid anhydride bond driven by GTP hydrolysis by CysN coupled to ATP hydrolysis by CysD. This is Sulfate adenylyltransferase subunit 2 from Shewanella baltica (strain OS195).